Here is a 327-residue protein sequence, read N- to C-terminus: (-)-delta-cadinene synthase (327 aa).

Mg(2+) is bound by residues Asp84, Asp85, Asn222, Thr226, and Glu230.

This sequence belongs to the terpene synthase family.

The enzyme catalyses (2E,6E)-farnesyl diphosphate = (-)-delta-cadinene + diphosphate. Catalyzes the conversion of (2E,6E)-farnesyl diphosphate into (-)-delta-cadinene. Cyclization mechanism involves an intermediate nerolidyl diphosphate leading to a helminthogermacradienyl cation. The polypeptide is (-)-delta-cadinene synthase (Streptomyces clavuligerus).